We begin with the raw amino-acid sequence, 323 residues long: o-succinylbenzoate synthase (323 aa).

The active-site Proton donor is the lysine 134. Mg(2+) contacts are provided by aspartate 162, glutamate 191, and aspartate 214. Lysine 236 (proton acceptor) is an active-site residue.

The protein belongs to the mandelate racemase/muconate lactonizing enzyme family. MenC type 1 subfamily. The cofactor is a divalent metal cation.

The catalysed reaction is (1R,6R)-6-hydroxy-2-succinyl-cyclohexa-2,4-diene-1-carboxylate = 2-succinylbenzoate + H2O. It functions in the pathway quinol/quinone metabolism; 1,4-dihydroxy-2-naphthoate biosynthesis; 1,4-dihydroxy-2-naphthoate from chorismate: step 4/7. Its pathway is quinol/quinone metabolism; menaquinone biosynthesis. Converts 2-succinyl-6-hydroxy-2,4-cyclohexadiene-1-carboxylate (SHCHC) to 2-succinylbenzoate (OSB). The protein is o-succinylbenzoate synthase of Yersinia pseudotuberculosis serotype I (strain IP32953).